A 446-amino-acid polypeptide reads, in one-letter code: Protein odr-4 homolog (446 aa).

Helical transmembrane passes span 81 to 101 (MLPG…ELSK) and 424 to 444 (MGVV…FNYF).

Belongs to the ODR-4 family.

The protein resides in the membrane. Its function is as follows. May play a role in the trafficking of a subset of G-protein coupled receptors. The chain is Protein odr-4 homolog (ODR4) from Gallus gallus (Chicken).